The chain runs to 490 residues: Acetyl-coenzyme A carboxylase carboxyl transferase subunit beta, chloroplastic (490 aa).

The interval 184 to 203 (LNSSENEGSSRRTRTKGSDL) is disordered. The region spanning 221–490 (LWVQCENCYG…PLNQKSSKIK (270 aa)) is the CoA carboxyltransferase N-terminal domain. Positions 225, 228, 244, and 247 each coordinate Zn(2+). The segment at 225–247 (CENCYGLNYKKFLKSKMNICEQC) adopts a C4-type zinc-finger fold.

The protein belongs to the AccD/PCCB family. In terms of assembly, acetyl-CoA carboxylase is a heterohexamer composed of biotin carboxyl carrier protein, biotin carboxylase and 2 subunits each of ACCase subunit alpha and ACCase plastid-coded subunit beta (accD). Requires Zn(2+) as cofactor.

Its subcellular location is the plastid. It localises to the chloroplast stroma. The enzyme catalyses N(6)-carboxybiotinyl-L-lysyl-[protein] + acetyl-CoA = N(6)-biotinyl-L-lysyl-[protein] + malonyl-CoA. Its pathway is lipid metabolism; malonyl-CoA biosynthesis; malonyl-CoA from acetyl-CoA: step 1/1. In terms of biological role, component of the acetyl coenzyme A carboxylase (ACC) complex. Biotin carboxylase (BC) catalyzes the carboxylation of biotin on its carrier protein (BCCP) and then the CO(2) group is transferred by the transcarboxylase to acetyl-CoA to form malonyl-CoA. The sequence is that of Acetyl-coenzyme A carboxylase carboxyl transferase subunit beta, chloroplastic from Solanum bulbocastanum (Wild potato).